Here is a 415-residue protein sequence, read N- to C-terminus: Gamma-glutamyl phosphate reductase (415 aa).

The protein belongs to the gamma-glutamyl phosphate reductase family.

It localises to the cytoplasm. It catalyses the reaction L-glutamate 5-semialdehyde + phosphate + NADP(+) = L-glutamyl 5-phosphate + NADPH + H(+). Its pathway is amino-acid biosynthesis; L-proline biosynthesis; L-glutamate 5-semialdehyde from L-glutamate: step 2/2. Its function is as follows. Catalyzes the NADPH-dependent reduction of L-glutamate 5-phosphate into L-glutamate 5-semialdehyde and phosphate. The product spontaneously undergoes cyclization to form 1-pyrroline-5-carboxylate. In Thermotoga maritima (strain ATCC 43589 / DSM 3109 / JCM 10099 / NBRC 100826 / MSB8), this protein is Gamma-glutamyl phosphate reductase.